Reading from the N-terminus, the 194-residue chain is Cytochrome c oxidase assembly protein CtaG (194 aa).

Residues 1–12 (MALRGPAKTVAQ) are Cytoplasmic-facing. The helical; Signal-anchor for type II membrane protein transmembrane segment at 13 to 35 (TVSVVIFMGALAWASVPLYDWFC) threads the bilayer. Residues 36–194 (RVTGFGGVTG…IEENSDTSLN (159 aa)) are Periplasmic-facing.

This sequence belongs to the COX11/CtaG family.

It localises to the cell inner membrane. In terms of biological role, exerts its effect at some terminal stage of cytochrome c oxidase synthesis, probably by being involved in the insertion of the copper B into subunit I. This is Cytochrome c oxidase assembly protein CtaG from Roseobacter denitrificans (strain ATCC 33942 / OCh 114) (Erythrobacter sp. (strain OCh 114)).